Reading from the N-terminus, the 512-residue chain is NAD(P)H-quinone oxidoreductase chain 4, chloroplastic (512 aa).

The next 14 membrane-spanning stretches (helical) occupy residues 4-24, 34-54, 87-107, 111-131, 134-154, 167-187, 208-228, 242-262, 274-294, 308-328, 330-350, 374-396, 417-437, and 462-482; these read VPWLTAIVLFPVSAGLLIPLL, WYALGICLLDLILMTYVFGCY, IGLILLTGFVTTLATLAAWPV, PKLFYFLMLAMYSGQLGLFAS, ILLFFVMWELELIPVYLLLSM, FILYTAGGSIFLLAGLLTASL, GLEILIYLGFLIAYAVKLPAF, HYSTCMLLAGILLKMGGYGFI, TVFAPWLVALGAYQIVYAALV, SSVSHMGFVLVGAGSLSDLGL, GAMLQMISHGLIGASLFFLAG, MFAMFTTCAMASLALPGMSGFVS, IITLIEAVGIILTPIYLLSMV, and VFVLGSLLLPMIGIGIYPNFA.

It belongs to the complex I subunit 4 family.

Its subcellular location is the plastid. It localises to the chloroplast thylakoid membrane. It carries out the reaction a plastoquinone + NADH + (n+1) H(+)(in) = a plastoquinol + NAD(+) + n H(+)(out). The enzyme catalyses a plastoquinone + NADPH + (n+1) H(+)(in) = a plastoquinol + NADP(+) + n H(+)(out). The polypeptide is NAD(P)H-quinone oxidoreductase chain 4, chloroplastic (Zygnema circumcarinatum (Green alga)).